The following is a 347-amino-acid chain: Uroporphyrinogen decarboxylase (347 aa).

Substrate contacts are provided by residues 24–28 (RQAGR), F42, D73, Y150, T205, and H320.

It belongs to the uroporphyrinogen decarboxylase family. Homodimer.

The protein localises to the cytoplasm. The catalysed reaction is uroporphyrinogen III + 4 H(+) = coproporphyrinogen III + 4 CO2. Its pathway is porphyrin-containing compound metabolism; protoporphyrin-IX biosynthesis; coproporphyrinogen-III from 5-aminolevulinate: step 4/4. Catalyzes the decarboxylation of four acetate groups of uroporphyrinogen-III to yield coproporphyrinogen-III. The chain is Uroporphyrinogen decarboxylase from Gloeobacter violaceus (strain ATCC 29082 / PCC 7421).